Reading from the N-terminus, the 586-residue chain is Probable transporter AQR1 (586 aa).

Disordered regions lie at residues 1–44 (MSRS…FEGA) and 61–82 (EGDL…PTQQ). Topologically, residues 1-99 (MSRSNSIYTE…PYTLLSYGQK (99 aa)) are extracellular. Residues 19–40 (NEQHLTREYTKPDGQTKSEKLN) are compositionally biased toward basic and acidic residues. The chain crosses the membrane as a helical span at residues 100 to 120 (WGMVAILTMCGFWSSLGSPIY). Residues 121–139 (YPALRQLEKQFNVDENMVN) lie on the Cytoplasmic side of the membrane. Residues 140–160 (VTVVVYLLFQGISPTVSGGLA) traverse the membrane as a helical segment. Residues 161 to 166 (DCFGRR) are Extracellular-facing. The helical transmembrane segment at 167–187 (PIILAGMLIYVIASIGLACAP) threads the bilayer. Ser188 is a topological domain (cytoplasmic). A helical transmembrane segment spans residues 189–209 (YGVIIFLRCIQSIGISPTIAI). The Extracellular segment spans residues 210-225 (SSGVVGDFTLKHERGT). The helical transmembrane segment at 226–246 (FVGATSGFVLLGQCFGSLIGA) threads the bilayer. Residues 247–255 (VLTARWDWR) are Cytoplasmic-facing. The helical transmembrane segment at 256–276 (AIFWFLTIGCGSCFLIAFLIL) threads the bilayer. The Extracellular portion of the chain corresponds to 277–334 (PETKRTIAGNLSIKPKRFINRAPIFLLGPVRRRFKYDNPDYETLDPTIPKLDLSSAGK). Residues 335–355 (ILVLPEIILSLFPSGLLFAMW) traverse the membrane as a helical segment. The Cytoplasmic portion of the chain corresponds to 356 to 374 (TLMLSSISSGLSVAPYNYH). Residues 375–395 (LVIIGVCYLPGGIGGLMGSFF) form a helical membrane-spanning segment. Residues 396-433 (TGRIIDMYFKRKIKKFEQDKANGLIPQDAEINMFKVRL) lie on the Extracellular side of the membrane. The helical transmembrane segment at 434–454 (VCLLPQNFLAVVAYLLFGWSI) threads the bilayer. Over 455-459 (DKGWR) the chain is Cytoplasmic. A helical transmembrane segment spans residues 460–480 (IESILITSFVCSYCAMSTLST). Residues 481 to 523 (STTLLVDLYPTKSSTASSCFNFVRCSLSTIFMGCFAKMKAAMT) are Extracellular-facing. The chain crosses the membrane as a helical span at residues 524 to 544 (VGGTFTFLCALVFFFNFLMFI). The Cytoplasmic segment spans residues 545–586 (PMKYGMKWREDRLLKQQRQSWLNTLAVKAKKGTKRDQNDNHN).

Belongs to the major facilitator superfamily. CAR1 family.

Its subcellular location is the membrane. Its function is as follows. Probable transporter that confers resistance to short-chain monocarboxylic acids and quinidine. The sequence is that of Probable transporter AQR1 (AQR1) from Saccharomyces cerevisiae (strain ATCC 204508 / S288c) (Baker's yeast).